The primary structure comprises 142 residues: Large ribosomal subunit protein uL16 (142 aa).

This sequence belongs to the universal ribosomal protein uL16 family. As to quaternary structure, part of the 50S ribosomal subunit.

In terms of biological role, binds 23S rRNA and is also seen to make contacts with the A and possibly P site tRNAs. The polypeptide is Large ribosomal subunit protein uL16 (Pseudothermotoga lettingae (strain ATCC BAA-301 / DSM 14385 / NBRC 107922 / TMO) (Thermotoga lettingae)).